The chain runs to 1142 residues: Collagen alpha-1(XIX) chain (1142 aa).

Positions 1–23 (MRLTGPWKLWLWMSIFLLPASTS) are cleaved as a signal peptide. The Laminin G-like domain occupies 50–234 (NKLEVSGFDL…LHQLKIYCSA (185 aa)). Disordered stretches follow at residues 288-680 (IPNK…GDPI), 704-1009 (PGLK…PGIP), and 1053-1142 (YGRP…TGGN). Collagen-like domains lie at 292–349 (GEAG…GEKG), 350–391 (DPAL…ALPG), and 392–433 (SLGI…GIQG). Positions 292-351 (GEAGLPGAPGSPGQKGHKGEPGENGLHGAPGFPGQKGEQGFEGSKGETGEKGEQGEKGDP) are triple-helical region 1 (COL1). Positions 335–350 (SKGETGEKGEQGEKGD) are enriched in basic and acidic residues. Positions 370 to 429 (GPPGPKGEKGDTGPPGPPALPGSLGIQGPQGPPGKEGQRGRRGKTGPPGKPGPPGPPGPP) are triple-helical region 2 (COL2). The segment covering 390 to 404 (PGSLGIQGPQGPPGK) has biased composition (low complexity). Pro residues predominate over residues 417–429 (PGKPGPPGPPGPP). Composition is skewed to basic and acidic residues over residues 444 to 463 (KDNK…DKGE) and 478 to 496 (QKGE…DRGE). The triple-helical region 3 (COL3) stretch occupies residues 448 to 688 (GNDEHEAGGL…PIALPLLGDI (241 aa)). 8 consecutive Collagen-like domains span residues 474–516 (GPKG…GPPG), 568–624 (GPPG…GPQG), 626–678 (GIPG…PPGD), 728–778 (KGDI…APGP), 779–814 (TGPP…PPGP), 845–903 (GPPG…VPGE), 904–947 (PGER…GDRG), and 948–1004 (PKGE…GSPG). Positions 640-651 (PGIQGPRGLPGL) are enriched in low complexity. Residues 700–818 (QASVPGLKSN…PGPPGPPGIP (119 aa)) are triple-helical region 4 (COL4). Composition is skewed to basic and acidic residues over residues 720-731 (GKYDSMARKGDI) and 743-752 (EGPKGSKGER). Composition is skewed to pro residues over residues 806–817 (PGKPGPPGPPGI) and 840–852 (YPGP…PKGD). Residues 833-1012 (GGVNVPSYPG…PGIPGIPADA (180 aa)) form a triple-helical region 5 (COL5) region. A compositionally biased stretch (basic and acidic residues) spans 943 to 954 (PGDRGPKGERGD). Residues 952–954 (RGD) carry the Cell attachment site motif. The segment at 1054 to 1111 (GRPGPPGKDGLPGPPGDPGPQGYRGQKGERGEPGIGLPGSPGLPGTSALGLPGSPGAP) is triple-helical region 6 (COL6). The segment covering 1093–1107 (SPGLPGTSALGLPGS) has biased composition (low complexity). Positions 1108–1119 (PGAPGPQGPPGP) are enriched in pro residues.

It belongs to the fibril-associated collagens with interrupted helices (FACIT) family. As to quaternary structure, oligomer; disulfide-linked. Prolines at the third position of the tripeptide repeating unit (G-X-Y) are hydroxylated in some or all of the chains. As to expression, localized to vascular, neuronal, mesenchymal, and some epithelial basement membrane zones in umbilical cord.

It is found in the secreted. The protein localises to the extracellular space. Its subcellular location is the extracellular matrix. May act as a cross-bridge between fibrils and other extracellular matrix molecules. Involved in skeletal myogenesis in the developing esophagus. May play a role in organization of the pericellular matrix or the sphinteric smooth muscle. The sequence is that of Collagen alpha-1(XIX) chain (COL19A1) from Homo sapiens (Human).